Here is a 567-residue protein sequence, read N- to C-terminus: UPF0313 protein TM_0337 (567 aa).

The Radical SAM core domain maps to 288-560; that stretch reads KAIETVKFSI…NKMKENVLFK (273 aa). 3 residues coordinate [4Fe-4S] cluster: Cys-303, Cys-307, and Cys-310.

Belongs to the UPF0313 family. [4Fe-4S] cluster is required as a cofactor.

The chain is UPF0313 protein TM_0337 from Thermotoga maritima (strain ATCC 43589 / DSM 3109 / JCM 10099 / NBRC 100826 / MSB8).